The following is an 843-amino-acid chain: Structure-specific endonuclease subunit SLX4 (843 aa).

Disordered stretches follow at residues 26–111, 281–313, 339–377, 603–655, and 729–748; these read SPPS…KTTT, AIPT…QKGK, NVAP…NGPP, SKTF…AKAL, and ATPN…FSIE. 2 stretches are compositionally biased toward polar residues: residues 50 to 69 and 285 to 301; these read ASFS…NGEN and PTES…SSKQ. Residues 302 to 311 show a composition bias toward basic residues; sequence QRVKAKKPQK. Polar residues-rich tracts occupy residues 349-372 and 603-616; these read NISN…TLKN and SKTF…NQGT. Basic and acidic residues predominate over residues 617 to 636; it reads DDARKNGFRKENHSDVRVRP. The span at 739-748 shows a compositional bias: low complexity; the sequence is RSSSTSFSIE.

The protein belongs to the SLX4 family. In terms of assembly, forms a heterodimer with SLX1. In terms of processing, phosphorylated in response to DNA damage.

It is found in the nucleus. Functionally, regulatory subunit of the SLX1-SLX4 structure-specific endonuclease that resolves DNA secondary structures generated during DNA repair and recombination. Has endonuclease activity towards branched DNA substrates, introducing single-strand cuts in duplex DNA close to junctions with ss-DNA. This Ajellomyces capsulatus (strain G186AR / H82 / ATCC MYA-2454 / RMSCC 2432) (Darling's disease fungus) protein is Structure-specific endonuclease subunit SLX4.